We begin with the raw amino-acid sequence, 710 residues long: Lactoperoxidase (710 aa).

The first 23 residues, 1 to 23 (MKVLLHLPALLASLTLLQTAASA), serve as a signal peptide directing secretion. A propeptide spanning residues 24–80 (SDDPTAETDIIHDTVEEVKVWVNKAFLDSRDRLKMAMTTKIHSTRHLSDYLKHAKGR) is cleaved from the precursor. Residues Cys130 and Cys143 are joined by a disulfide bond. Asp223 provides a ligand contact to heme b. His224 (proton acceptor) is an active-site residue. Asp225 contributes to the Ca(2+) binding site. 2 disulfides stabilise this stretch: Cys244-Cys254 and Cys248-Cys272. Positions 299, 301, 303, and 305 each coordinate Ca(2+). Ser313 is modified (phosphoserine). A disulfide bridge links Cys352 with Cys363. Residues Glu373 and His466 each coordinate heme b. Tyr480 is subject to 3'-nitrotyrosine. 2 cysteine pairs are disulfide-bonded: Cys571-Cys628 and Cys669-Cys694.

This sequence belongs to the peroxidase family. The cofactor is Ca(2+). It depends on heme b as a cofactor. As to expression, expressed in the colon, including colonocytes and mucin-containing goblet cells. Not detected in the ileum.

Its subcellular location is the secreted. The protein resides in the cytoplasm. The catalysed reaction is 2 a phenolic donor + H2O2 = 2 a phenolic radical donor + 2 H2O. It catalyses the reaction thiocyanate + H2O2 + H(+) = hypothiocyanous acid + H2O. The enzyme catalyses iodide + H2O2 = hypoiodite + H2O. Heme-containing oxidoreductase which catalyzes the conversion of thiocyanate (SCN(-)) into antimicrobial agent hypothiocyanous acid (OSCN(-)) in the presence of hydrogen peroxide (H2O2). Also involved in the conversion of iodide (I(-)) into hypoiodite (IO(-)) in the presence of H2O2. Responsible for the inactivation of a wide range of micro-organisms and hence, important component of defense mechanism. May be implicated in airway host defense against infection. May contribute to maintaining an appropriate H2O2 cellular level, therefore protecting cells from H2O2-caused injuries and inflammation. The sequence is that of Lactoperoxidase from Mus musculus (Mouse).